Consider the following 883-residue polypeptide: Putative pentatricopeptide repeat-containing protein At1g13800 (883 aa).

19 PPR repeats span residues 145 to 180 (LIRVSTALVKAYANLDMFDEAIDIFFRAYYSLGRAP), 181 to 215 (DIKALNFLISRMIASGRSDMVVGFFWEIERLGLDA), 216 to 251 (DAHTYVLVVQALWRNDDKEELEKLLSRLLISETRNP), 253 to 285 (VFYLNFIEGLCLNQMTDIAYFLLQPLRDANILV), 290 to 324 (LGIAYRKVVRGLCYEMRIEDAESVVLDMEKHGIDP), 325 to 359 (DVYVYSAIIEGHRKNMNIPKAVDVFNKMLKKRKRI), 360 to 394 (NCVIVSSILQCYCQMGNFSEAYDLFKEFRETNISL), 395 to 429 (DRVCYNVAFDALGKLGKVEEAIELFREMTGKGIAP), 430 to 464 (DVINYTTLIGGCCLQGKCSDAFDLMIEMDGTGKTP), 465 to 499 (DIVIYNVLAGGLATNGLAQEAFETLKMMENRGVKP), 500 to 534 (TYVTHNMVIEGLIDAGELDKAEAFYESLEHKSREN), 537 to 561 (SMVKGFCAAGCLDHAFERFIRLEFP), 563 to 598 (PKSVYFTLFTSLCAEKDYISKAQDLLDRMWKLGVEP), 599 to 633 (EKSMYGKLIGAWCRVNNVRKAREFFEILVTKKIVP), 634 to 668 (DLFTYTIMINTYCRLNEPKQAYALFEDMKRRDVKP), 697 to 731 (DVVYYTIMINRYCHLNDLKKVYALFKDMKRREIVP), 760 to 794 (DVFYYTVLIDWQCKIGDLGEAKRIFDQMIESGVDP), 795 to 829 (DAAPYTALIACCCKMGYLKEAKMIFDRMIESGVKP), and 830 to 864 (DVVPYTALIAGCCRNGFVLKAVKLVKEMLEKGIKP).

It belongs to the PPR family. P subfamily.

This Arabidopsis thaliana (Mouse-ear cress) protein is Putative pentatricopeptide repeat-containing protein At1g13800.